The sequence spans 491 residues: Cytochrome P450 2B3 (491 aa).

A heme-binding site is contributed by cysteine 436.

It belongs to the cytochrome P450 family. The cofactor is heme. Liver. Not found in the lung, kidney and prostate.

Its subcellular location is the endoplasmic reticulum membrane. It localises to the microsome membrane. It catalyses the reaction an organic molecule + reduced [NADPH--hemoprotein reductase] + O2 = an alcohol + oxidized [NADPH--hemoprotein reductase] + H2O + H(+). Cytochromes P450 are a group of heme-thiolate monooxygenases. In liver microsomes, this enzyme is involved in an NADPH-dependent electron transport pathway. It oxidizes a variety of structurally unrelated compounds, including steroids, fatty acids, and xenobiotics. This is Cytochrome P450 2B3 (Cyp2b3) from Rattus norvegicus (Rat).